The primary structure comprises 168 residues: Vasopressin-neurophysin 2-copeptin (168 aa).

The signal sequence occupies residues 1–23 (MLAMMLNTTLSACFLSLLALTSA). Cys-24 and Cys-29 are disulfide-bonded. Gly-32 bears the Glycine amide mark. Cystine bridges form between Cys-45–Cys-89, Cys-48–Cys-62, Cys-56–Cys-79, Cys-63–Cys-69, Cys-96–Cys-108, Cys-102–Cys-120, and Cys-109–Cys-114. N-linked (GlcNAc...) asparagine glycosylation occurs at Asn-135.

It belongs to the vasopressin/oxytocin family. Interacts with vasopressin receptors V1bR/AVPR1B (Ki=85 pM), V1aR/AVPR1A (Ki=0.6 nM) and V2R/AVPR2 (Ki=4.9 nM). Interacts with oxytocin receptor (OXTR) (Ki=110 nM).

The protein localises to the secreted. Functionally, neurophysin 2 specifically binds vasopressin. In terms of biological role, vasopressin has a direct antidiuretic action on the kidney, it also causes vasoconstriction of the peripheral vessels. Acts by binding to vasopressin receptors (V1bR/AVPR1B, V1aR/AVPR1A, and V2R/AVPR2). The polypeptide is Vasopressin-neurophysin 2-copeptin (Avp) (Rattus norvegicus (Rat)).